Here is an 805-residue protein sequence, read N- to C-terminus: Transforming acidic coiled-coil-containing protein 1 (805 aa).

A2 is modified (N-acetylalanine). A2 carries the N-myristoyl glycine lipid modification. Positions 2–55 (AFSPWQILSPVQWAKWTWSAVRGGAAGEDEAGGPEGDPEEEDSQAETKSLSFSS) are interaction with LSM7 and SNRPG. 3 positions are modified to phosphoserine: S4, S10, and S44. The tract at residues 23–140 (RGGAAGEDEA…SVKNFREEPE (118 aa)) is disordered. The span at 28–45 (GEDEAGGPEGDPEEEDSQ) shows a compositional bias: acidic residues. Polar residues-rich tracts occupy residues 47–60 (ETKSLSFSSDSEGN) and 111–128 (SKTCSKPSENEVPQQAID). The segment covering 130 to 140 (HSVKNFREEPE) has biased composition (basic and acidic residues). Phosphoserine occurs at positions 147 and 153. The interval 152–259 (FSIETKDSTD…TNAAVEGTPL (108 aa)) is interaction with TDRD7. Positions 206–427 (EASAEADLKA…DPDNFDESMD (222 aa)) are interaction with YEATS4. SPAZ domains lie at 215–297 (AGNS…TPGT) and 359–507 (SKSA…TDEE). The segment at 215–457 (AGNSCPELVP…VNEILESPKK (243 aa)) is disordered. The Bipartite nuclear localization signal 1 signature appears at 226 to 241 (RRSKLRKPKPVPLRKK). A compositionally biased stretch (basic residues) spans 226–242 (RRSKLRKPKPVPLRKKA). S228 is subject to Phosphoserine; by AURKC. Phosphoserine occurs at positions 248 and 276. Composition is skewed to polar residues over residues 296–305 (GTLSSDTNDS), 377–413 (LSQTSSKPDPSQWESPSFNPFGSHSVLQNSPPLSSEG), and 431–447 (PTTTLTSSDFCSPTGNH). Phosphoserine occurs at positions 381 and 406. Positions 455 to 471 (PKKAKSRLITSGCKVKK) match the Bipartite nuclear localization signal 2 motif. S483 carries the post-translational modification Phosphoserine. Residues 493–526 (ISDISNRDGHATDEEKLASTSCGQKSAGAEVKGE) form a disordered region. The span at 497–509 (SNRDGHATDEEKL) shows a compositional bias: basic and acidic residues. The residue at position 533 (Y533) is a Phosphotyrosine. S591 carries the post-translational modification Phosphoserine. Residues 610 to 805 (IREEIITKEI…ELIAKLGKTD (196 aa)) are a coiled coil. Residues 701–805 (VLEGFKKNEE…ELIAKLGKTD (105 aa)) are interaction with CH-TOG.

It belongs to the TACC family. As to quaternary structure, interacts with KIAA0097/CH-TOG and with the oncogenic transcription factor YEATS4. Interacts with AURKA, AURKB and AURKC. Interacts with LSM7, TDRD7 and SNRPG. Interacts with GCN5L2 and PCAF. Interacts with the thyroid hormone receptors THRB and THRA, predominantly with isoform alpha-2. The interaction with THRA isoform alpha-1 and THRB is decreased in the presence of thyroid hormone T3. Also interacts with other nuclear receptors, including ESR1, NR3C1, PPARG, RARA and RXRA, preferentially in the absence of their hormonal ligands. In terms of processing, isoform 1 is heavily phosphorylated; isoform 6 is not. As to expression, isoform 1, isoform 3 and isoform 5 are ubiquitous. Isoform 2 is strongly expressed in the brain, weakly detectable in lung and colon, and overexpressed in gastric cancer. Isoform 4 is not detected in normal tissues, but strong expression was found in gastric cancer tissues. Down-regulated in a subset of cases of breast cancer.

It localises to the cytoplasm. Its subcellular location is the nucleus. The protein localises to the cytoskeleton. The protein resides in the microtubule organizing center. It is found in the centrosome. It localises to the midbody. Its subcellular location is the membrane. Functionally, involved in transcription regulation induced by nuclear receptors, including in T3 thyroid hormone and all-trans retinoic acid pathways. Might promote the nuclear localization of the receptors. Likely involved in the processes that promote cell division prior to the formation of differentiated tissues. This chain is Transforming acidic coiled-coil-containing protein 1 (TACC1), found in Homo sapiens (Human).